The chain runs to 349 residues: Threonine-rich protein (349 aa).

Positions 1–19 are cleaved as a signal peptide; sequence MKGLTLACIAATVVAASHA. N-linked (GlcNAc...) asparagine glycosylation occurs at Asn257. The tract at residues 300–326 is disordered; it reads QPDVSPMSVRKRRQAESAEEDDDLVGD. Residues 316-326 show a composition bias toward acidic residues; it reads SAEEDDDLVGD. The stretch at 316–349 forms a coiled coil; that stretch reads SAEEDDDLVGDMEDLKELEQEIQEALEEVEKLDV.

As to expression, component of the acid-insoluble and acid-soluble organic matrix of calcified layers of the shell (at protein level).

Its subcellular location is the secreted. The polypeptide is Threonine-rich protein (Lottia gigantea (Giant owl limpet)).